The sequence spans 100 residues: Urease subunit gamma (100 aa).

The protein belongs to the urease gamma subunit family. As to quaternary structure, heterotrimer of UreA (gamma), UreB (beta) and UreC (alpha) subunits. Three heterotrimers associate to form the active enzyme.

It localises to the cytoplasm. The catalysed reaction is urea + 2 H2O + H(+) = hydrogencarbonate + 2 NH4(+). It participates in nitrogen metabolism; urea degradation; CO(2) and NH(3) from urea (urease route): step 1/1. In Mycobacterium bovis (strain ATCC BAA-935 / AF2122/97), this protein is Urease subunit gamma.